Here is a 124-residue protein sequence, read N- to C-terminus: uncharacterized protein (124 aa).

Residues 62-72 (KKNKKQTFLKH) are compositionally biased toward basic residues. A disordered region spans residues 62–86 (KKNKKQTFLKHHQSDDHSENKVYKS). Residues 73–83 (HQSDDHSENKV) show a composition bias toward basic and acidic residues. The stretch at 80–112 (ENKVYKSKKLEKKIQQLNKKKQLIDTKINFLKE) forms a coiled coil.

This is an uncharacterized protein from Dictyostelium discoideum (Social amoeba).